The following is a 219-amino-acid chain: Guanylate kinase (219 aa).

In terms of domain architecture, Guanylate kinase-like spans 15–194 (GLMLVISSPS…AFSSVRAIVE (180 aa)). 22–29 (SPSGAGKS) serves as a coordination point for ATP.

The protein belongs to the guanylate kinase family.

The protein resides in the cytoplasm. The catalysed reaction is GMP + ATP = GDP + ADP. Essential for recycling GMP and indirectly, cGMP. The sequence is that of Guanylate kinase from Rhizobium meliloti (strain 1021) (Ensifer meliloti).